Here is a 332-residue protein sequence, read N- to C-terminus: Glyceraldehyde-3-phosphate dehydrogenase (332 aa).

NAD(+) contacts are provided by residues 10 to 11, aspartate 36, lysine 81, and serine 116; that span reads RI. D-glyceraldehyde 3-phosphate contacts are provided by residues 150–152, threonine 181, arginine 197, 210–211, and arginine 233; these read SCT and TK. The active-site Nucleophile is cysteine 151. Asparagine 314 serves as a coordination point for NAD(+).

The protein belongs to the glyceraldehyde-3-phosphate dehydrogenase family. Homotetramer.

It localises to the cytoplasm. It catalyses the reaction D-glyceraldehyde 3-phosphate + phosphate + NAD(+) = (2R)-3-phospho-glyceroyl phosphate + NADH + H(+). The protein operates within carbohydrate degradation; glycolysis; pyruvate from D-glyceraldehyde 3-phosphate: step 1/5. In terms of biological role, catalyzes the oxidative phosphorylation of glyceraldehyde 3-phosphate (G3P) to 1,3-bisphosphoglycerate (BPG) using the cofactor NAD. The first reaction step involves the formation of a hemiacetal intermediate between G3P and a cysteine residue, and this hemiacetal intermediate is then oxidized to a thioester, with concomitant reduction of NAD to NADH. The reduced NADH is then exchanged with the second NAD, and the thioester is attacked by a nucleophilic inorganic phosphate to produce BPG. The polypeptide is Glyceraldehyde-3-phosphate dehydrogenase (gapA) (Helicobacter pylori (strain J99 / ATCC 700824) (Campylobacter pylori J99)).